Reading from the N-terminus, the 61-residue chain is Photosystem II reaction center protein K (61 aa).

The propeptide occupies 1–24 (MLNIFSLICICLNSALHSSSFFFA). A helical transmembrane segment spans residues 32–52 (FFNPIVDFMPVIPVLFFLLAL).

The protein belongs to the PsbK family. As to quaternary structure, PSII is composed of 1 copy each of membrane proteins PsbA, PsbB, PsbC, PsbD, PsbE, PsbF, PsbH, PsbI, PsbJ, PsbK, PsbL, PsbM, PsbT, PsbX, PsbY, PsbZ, Psb30/Ycf12, at least 3 peripheral proteins of the oxygen-evolving complex and a large number of cofactors. It forms dimeric complexes.

The protein localises to the plastid. The protein resides in the chloroplast thylakoid membrane. One of the components of the core complex of photosystem II (PSII). PSII is a light-driven water:plastoquinone oxidoreductase that uses light energy to abstract electrons from H(2)O, generating O(2) and a proton gradient subsequently used for ATP formation. It consists of a core antenna complex that captures photons, and an electron transfer chain that converts photonic excitation into a charge separation. This chain is Photosystem II reaction center protein K, found in Drimys granadensis.